The primary structure comprises 280 residues: Keratin, type I cytoskeletal 47 kDa (280 aa).

The head stretch occupies residues Met1–Asn81. Residues Asp82 to Trp117 are coil 1A. The 199-residue stretch at Asp82–Lys280 folds into the IF rod domain. Residues Tyr118–Ile139 form a linker 1 region. The interval Ile140 to Ala231 is coil 1B. A linker 12 region spans residues Lys232–Ile254. The segment at Leu255 to Lys280 is coil 2.

This sequence belongs to the intermediate filament family. In terms of assembly, heterotetramer of two type I and two type II keratins.

This Xenopus laevis (African clawed frog) protein is Keratin, type I cytoskeletal 47 kDa (xk81b1).